A 130-amino-acid chain; its full sequence is Small ribosomal subunit protein uS8 (130 aa).

It belongs to the universal ribosomal protein uS8 family. As to quaternary structure, part of the 30S ribosomal subunit. Contacts proteins S5 and S12.

Functionally, one of the primary rRNA binding proteins, it binds directly to 16S rRNA central domain where it helps coordinate assembly of the platform of the 30S subunit. The sequence is that of Small ribosomal subunit protein uS8 from Shewanella halifaxensis (strain HAW-EB4).